The sequence spans 1406 residues: MKDLLKFLKQQNKTKEFDGIKIGLASPEMVRSWSFGEVKKPETINYRTFKPEREGLFCARIFGPIKDYECLCGKYKRLKHRGVICEKCGVEVTQSKVRRDRMGHIELASPVAHIWFLKSLPSRIGLMLDMTLRDIERILYFESFVVVEPGMTDLERRQILLEEEYLDMLEQWGDEFEAVMGAEAIFSLLKQLDLDHEIAEMREELGTTNSETKRKKLTKRLKLVESFHQSSNKPEWMILTVLPVLPPDLRPLVPLDGGRFATSDLNDLYRRVINRNNRLKRLLDLAAPDIIVRNEKRMLQESVDALLDNGRRGRAITGSNKRPLKSLADMIKGKQGRFRQNLLGKRVDYSGRSVITVGPTLRLHQCGLPKKMALELFKPFVYGKLEALGLATTIKAAKKLVDREGGEVWDILEGVIREHPVLLNRAPTLHRLGIQAFEPVLIEGKAIQLHPLVCAAYNADFDGDQMAVHVPLTIEAQLEARTLMMSTNNILSPANGEPIIVPSQDVVLGLYYMTRSKINSLGEDMWFQSAKEAEKAYRAGAVGLQAIVKVRMKQVHIADDKSRTETTNIIETTVGRAILSLIMPEGLPFELVDLPMGKKQISTALNACYRLLGIKHTVIFADQLMYTGFEYATLSGASVCIDDMVIPTTKKTLVEAAEAEVQEIHEQFQAGLVTAGERYNKVIDIWASANEQVAKAMMENLSKDTVVNSKGEEVQQDSFNSVYMMADSGARGSAAQIRQLAGMRGLMAKPDGSIIETPITANFREGLNVLQYFISTHGARKGLADTALKTANSGYLTRRLVDIAQDLVITEKDCGSEDGLLVTPLIQGGDVVEALRERVLGRVVAQDIIKPGTKGEVLIARNVLLDEKLCDLIEEASVDQVWVRSVITCQTDFGACAQCYGRDLARGHMVGQGEAIGVMAAQSIGEPGTQLTMRTFHIGGAASRAASENNIQVKNTGKIKLHNAKFVINSEQKVVVTSRSTELTIIDKLGRTKENHRLPYGAVLEKQDGAEITSGEIIANWDPHTHPIITEVEGTVQFLDFIEGLSITKQADEFTGLSSTVIIDPAQRPNAGKELRPMVKLVDPQGNDLFIPGTDVAAQYALAANAIVSLEDGAKVRVGDAVARIPQESSKTRDITGGLPRVADLFEARTPKDAAILAEVSGTLAFGKETKGKRRLVITQANGEAYEEMVPKWRHLNIFEGEKIEKGEVISDGPESPHDILRLRGISPVANYITNEVQEVYRLQGVKINDKHIEVIVNQMLRKGTITDNGDSAFLVGEQAEVARVVIENRRLVAEGKAIATFDYQLLGITKASLATESFISAASFQETTRVLTEAAVAGKCDQLHGLKENVIVGRLIPAGTGFAHHRARAAAKAAELAPKVEETIVDTGTAEQNLADLLNAVDFGD.

Zn(2+)-binding residues include cysteine 70, cysteine 72, cysteine 85, and cysteine 88. Residues aspartate 460, aspartate 462, and aspartate 464 each coordinate Mg(2+). 4 residues coordinate Zn(2+): cysteine 814, cysteine 889, cysteine 896, and cysteine 899.

It belongs to the RNA polymerase beta' chain family. The RNAP catalytic core consists of 2 alpha, 1 beta, 1 beta' and 1 omega subunit. When a sigma factor is associated with the core the holoenzyme is formed, which can initiate transcription. Mg(2+) is required as a cofactor. It depends on Zn(2+) as a cofactor.

It carries out the reaction RNA(n) + a ribonucleoside 5'-triphosphate = RNA(n+1) + diphosphate. In terms of biological role, DNA-dependent RNA polymerase catalyzes the transcription of DNA into RNA using the four ribonucleoside triphosphates as substrates. The sequence is that of DNA-directed RNA polymerase subunit beta' from Psychromonas ingrahamii (strain DSM 17664 / CCUG 51855 / 37).